The following is a 377-amino-acid chain: Cytochrome c peroxidase, mitochondrial (377 aa).

A mitochondrion-targeting transit peptide spans 1–17 (MSFRAPNLIRSAAGRRA). The active-site Proton acceptor is the His-138. His-261 lines the heme b pocket. Trp-277 functions as the Tryptophan radical intermediate in the catalytic mechanism.

This sequence belongs to the peroxidase family. Cytochrome c peroxidase subfamily. In terms of assembly, forms a one-to-one complex with cytochrome c. Requires heme b as cofactor.

It is found in the mitochondrion matrix. The protein resides in the mitochondrion intermembrane space. It carries out the reaction 2 Fe(II)-[cytochrome c] + H2O2 + 2 H(+) = 2 Fe(III)-[cytochrome c] + 2 H2O. Destroys radicals which are normally produced within the cells and which are toxic to biological systems. The polypeptide is Cytochrome c peroxidase, mitochondrial (CCP1) (Cryptococcus neoformans var. neoformans serotype D (strain JEC21 / ATCC MYA-565) (Filobasidiella neoformans)).